The primary structure comprises 421 residues: Testin (421 aa).

Positions 92–199 (MILTNPVAAK…GDVKLPCEMD (108 aa)) constitute a PET domain. A disordered region spans residues 133–164 (EKQPVAGSEGAQYRKKQLAKQLPAHDQDPSKC). The span at 155–164 (PAHDQDPSKC) shows a compositional bias: basic and acidic residues. LIM zinc-binding domains are found at residues 234 to 297 (YFCY…CDSE), 299 to 359 (PRCA…NHAV), and 362 to 421 (QGCH…KMMS).

The protein belongs to the prickle / espinas / testin family. Interacts via LIM domain 1 with ZYX. Interacts (via LIM domain 3) with ENAH and VASP. Interacts with ALKBH4, talin, actin, alpha-actinin, GRIP1 and PXN. Interacts (via LIM domain 2) with ACTL7A (via N-terminus). Heterodimer with ACTL7A; the heterodimer interacts with ENAH to form a heterotrimer.

It localises to the cytoplasm. The protein localises to the cell junction. It is found in the focal adhesion. In terms of biological role, scaffold protein that may play a role in cell adhesion, cell spreading and in the reorganization of the actin cytoskeleton. Plays a role in the regulation of cell proliferation. May act as a tumor suppressor. The protein is Testin (TES) of Plecturocebus moloch (Dusky titi monkey).